The chain runs to 119 residues: Methylglyoxal synthase (119 aa).

An MGS-like domain is found at 1-119; the sequence is MKIALIAHDK…KTAELIIKQF (119 aa). Residues His8, Lys12, 34 to 37, and 54 to 55 contribute to the substrate site; these read TGTT and SG. The active-site Proton donor/acceptor is Asp60. Residue His87 participates in substrate binding.

Belongs to the methylglyoxal synthase family.

It catalyses the reaction dihydroxyacetone phosphate = methylglyoxal + phosphate. Catalyzes the formation of methylglyoxal from dihydroxyacetone phosphate. The sequence is that of Methylglyoxal synthase from Clostridium beijerinckii (strain ATCC 51743 / NCIMB 8052) (Clostridium acetobutylicum).